We begin with the raw amino-acid sequence, 619 residues long: Elongation factor 4 (619 aa).

Positions 17 to 198 (SVIRNFCIIA…RVVRAIPGPE (182 aa)) constitute a tr-type G domain. Residues 29-34 (DHGKST) and 145-148 (NKID) each bind GTP.

The protein belongs to the TRAFAC class translation factor GTPase superfamily. Classic translation factor GTPase family. LepA subfamily.

The protein localises to the cell membrane. It catalyses the reaction GTP + H2O = GDP + phosphate + H(+). Required for accurate and efficient protein synthesis under certain stress conditions. May act as a fidelity factor of the translation reaction, by catalyzing a one-codon backward translocation of tRNAs on improperly translocated ribosomes. Back-translocation proceeds from a post-translocation (POST) complex to a pre-translocation (PRE) complex, thus giving elongation factor G a second chance to translocate the tRNAs correctly. Binds to ribosomes in a GTP-dependent manner. The polypeptide is Elongation factor 4 (Micrococcus luteus (strain ATCC 4698 / DSM 20030 / JCM 1464 / CCM 169 / CCUG 5858 / IAM 1056 / NBRC 3333 / NCIMB 9278 / NCTC 2665 / VKM Ac-2230) (Micrococcus lysodeikticus)).